The chain runs to 116 residues: Host cell factor C1 regulator 1 (116 aa).

A disordered region spans residues 1-22 (MILQQPLERGPPGRDPRATTGV). An interaction with HCFC1 region spans residues 54-57 (DHPY). Positions 88-97 (IPEALRLLRL) match the Nuclear export signal motif.

In terms of assembly, interacts with HCFC1.

The protein localises to the cytoplasm. It localises to the nucleus. In terms of biological role, regulates HCFC1 activity by modulating its subcellular localization. Overexpression of HCFC1R1 leads to accumulation of HCFC1 in the cytoplasm. HCFC1R1-mediated export may provide the pool of cytoplasmic HCFC1 required for import of virion-derived VP16 into the nucleus. This is Host cell factor C1 regulator 1 (Hcfc1r1) from Rattus norvegicus (Rat).